Consider the following 299-residue polypeptide: tRNA pseudouridine synthase B (299 aa).

Asp38 functions as the Nucleophile in the catalytic mechanism.

It belongs to the pseudouridine synthase TruB family. Type 1 subfamily.

The enzyme catalyses uridine(55) in tRNA = pseudouridine(55) in tRNA. In terms of biological role, responsible for synthesis of pseudouridine from uracil-55 in the psi GC loop of transfer RNAs. The chain is tRNA pseudouridine synthase B from Pediococcus pentosaceus (strain ATCC 25745 / CCUG 21536 / LMG 10740 / 183-1w).